The following is a 400-amino-acid chain: Argininosuccinate synthase (400 aa).

Residue 9 to 17 (AYSGGLDTS) coordinates ATP. Residue Tyr-87 coordinates L-citrulline. Gly-117 lines the ATP pocket. The L-aspartate site is built by Thr-119, Asn-123, and Asp-124. Residue Asn-123 participates in L-citrulline binding. 5 residues coordinate L-citrulline: Arg-127, Ser-176, Ser-185, Glu-261, and Tyr-273.

This sequence belongs to the argininosuccinate synthase family. Type 1 subfamily. As to quaternary structure, homotetramer.

It localises to the cytoplasm. It catalyses the reaction L-citrulline + L-aspartate + ATP = 2-(N(omega)-L-arginino)succinate + AMP + diphosphate + H(+). It functions in the pathway amino-acid biosynthesis; L-arginine biosynthesis; L-arginine from L-ornithine and carbamoyl phosphate: step 2/3. In Chlorobium limicola (strain DSM 245 / NBRC 103803 / 6330), this protein is Argininosuccinate synthase.